We begin with the raw amino-acid sequence, 404 residues long: Phosphopentomutase (404 aa).

Mn(2+) contacts are provided by Asp10, Asp303, His308, Asp344, His345, and His356.

This sequence belongs to the phosphopentomutase family. Mn(2+) is required as a cofactor.

It localises to the cytoplasm. The catalysed reaction is 2-deoxy-alpha-D-ribose 1-phosphate = 2-deoxy-D-ribose 5-phosphate. The enzyme catalyses alpha-D-ribose 1-phosphate = D-ribose 5-phosphate. It functions in the pathway carbohydrate degradation; 2-deoxy-D-ribose 1-phosphate degradation; D-glyceraldehyde 3-phosphate and acetaldehyde from 2-deoxy-alpha-D-ribose 1-phosphate: step 1/2. Its function is as follows. Isomerase that catalyzes the conversion of deoxy-ribose 1-phosphate (dRib-1-P) and ribose 1-phosphate (Rib-1-P) to deoxy-ribose 5-phosphate (dRib-5-P) and ribose 5-phosphate (Rib-5-P), respectively. The protein is Phosphopentomutase of Shewanella baltica (strain OS185).